A 184-amino-acid polypeptide reads, in one-letter code: Gastrokine-2 (184 aa).

An N-terminal signal peptide occupies residues 1 to 20 (MKPLVAFLVVLSIFGIQSQA). A BRICHOS domain is found at 54 to 151 (HSGSCSSTTI…LCKHMPLYEG (98 aa)). A disulfide bond links Cys-81 and Cys-143.

In terms of assembly, heterodimer with TFF1; disulfide linked. Interacts with TFF2. As to expression, stomach foveolar epithelium and duodenal Brunner's glands.

It localises to the secreted. Its subcellular location is the golgi apparatus. The polypeptide is Gastrokine-2 (Gkn2) (Mus musculus (Mouse)).